The primary structure comprises 539 residues: UDP-N-acetylmuramate--L-alanine ligase (539 aa).

Residue 165–171 (GTHGKTT) participates in ATP binding.

It belongs to the MurCDEF family.

The protein localises to the cytoplasm. It carries out the reaction UDP-N-acetyl-alpha-D-muramate + L-alanine + ATP = UDP-N-acetyl-alpha-D-muramoyl-L-alanine + ADP + phosphate + H(+). Its pathway is cell wall biogenesis; peptidoglycan biosynthesis. Cell wall formation. The sequence is that of UDP-N-acetylmuramate--L-alanine ligase from Trichodesmium erythraeum (strain IMS101).